Consider the following 139-residue polypeptide: Plasmid stability protein StbB (139 aa).

The PINc domain occupies 2-136 (ILLDTNVISE…EAAGLNVINP (135 aa)). Residues aspartate 5 and aspartate 104 each contribute to the Mg(2+) site.

Belongs to the PINc/VapC protein family. It depends on Mg(2+) as a cofactor.

Functionally, toxic component of a type II toxin-antitoxin (TA) system. An RNase. Involved in plasmid stability. The polypeptide is Plasmid stability protein StbB (stbB) (Pseudomonas syringae pv. tomato (strain ATCC BAA-871 / DC3000)).